Consider the following 571-residue polypeptide: Phosphatidylinositol-3,5-bisphosphate 3-phosphatase MTMR2 (571 aa).

Residues 1 to 67 (MEEPPLLPGE…GVINRVEKIG (67 aa)) form the GRAM domain. Residues 133-508 (GWKVYDPIWE…RHLELWVGYY (376 aa)) form the Myotubularin phosphatase domain. Residues N258, N283, and I284 each coordinate a 1,2-diacyl-sn-glycero-3-phospho-(1D-myo-inositol-3,5-bisphosphate). Residues N258, N283, and I284 each coordinate a 1,2-diacyl-sn-glycero-3-phospho-(1D-myo-inositol-3-phosphate). C345 serves as the catalytic Phosphocysteine intermediate. 8 residues coordinate a 1,2-diacyl-sn-glycero-3-phospho-(1D-myo-inositol-3,5-bisphosphate): S346, D347, G348, W349, D350, R351, R387, and R391. A 1,2-diacyl-sn-glycero-3-phospho-(1D-myo-inositol-3-phosphate) contacts are provided by S346, D347, G348, W349, D350, and R351. R391 serves as a coordination point for a 1,2-diacyl-sn-glycero-3-phospho-(1D-myo-inositol-3-phosphate). Positions 521–553 (VHNRYKELLAKRAELQKKVEELQREITNRSTSS) form a coiled coil. The interval 544-571 (REITNRSTSSSERAGSPAQCVTPVQTVV) is disordered.

It belongs to the protein-tyrosine phosphatase family. Non-receptor class myotubularin subfamily. As to quaternary structure, homooligomer and heterooligomer.

It localises to the cytoplasm. It is found in the early endosome membrane. It catalyses the reaction a 1,2-diacyl-sn-glycero-3-phospho-(1D-myo-inositol-3,5-bisphosphate) + H2O = a 1,2-diacyl-sn-glycero-3-phospho-(1D-myo-inositol-5-phosphate) + phosphate. The catalysed reaction is a 1,2-diacyl-sn-glycero-3-phospho-(1D-myo-inositol-3-phosphate) + H2O = a 1,2-diacyl-sn-glycero-3-phospho-(1D-myo-inositol) + phosphate. It carries out the reaction 1,2-dioctanoyl-sn-glycero-3-phospho-(1-D-myo-inositol-3-phosphate) + H2O = 1,2-dioctanoyl-sn-glycero-3-phospho-(1D-myo-inositol) + phosphate. The enzyme catalyses 1,2-dioctanoyl-sn-glycero-3-phospho-(1D-myo-inositol-3,5-bisphosphate) + H2O = 1,2-dioctanoyl-sn-glycero-3-phospho-(1D-myo-inositol-5-phosphate) + phosphate. Its function is as follows. Lipid phosphatase that specifically dephosphorylates the D-3 position of phosphatidylinositol 3-phosphate and phosphatidylinositol 3,5-bisphosphate, generating phosphatidylinositol and phosphatidylinositol 5-phosphate. Regulates the level of these phosphoinositides critical for various biological processes including autophagy initiation and autophagosome maturation. This chain is Phosphatidylinositol-3,5-bisphosphate 3-phosphatase MTMR2, found in Gallus gallus (Chicken).